Consider the following 137-residue polypeptide: Large ribosomal subunit protein eL28 (137 aa).

S2 carries the N-acetylserine modification. Glycyl lysine isopeptide (Lys-Gly) (interchain with G-Cter in SUMO2) cross-links involve residues K58 and K65. S115 carries the phosphoserine modification.

Belongs to the eukaryotic ribosomal protein eL28 family. Component of the large ribosomal subunit.

The protein localises to the cytoplasm. Functionally, component of the large ribosomal subunit. The ribosome is a large ribonucleoprotein complex responsible for the synthesis of proteins in the cell. The polypeptide is Large ribosomal subunit protein eL28 (RPL28) (Bos taurus (Bovine)).